The sequence spans 630 residues: Alpha-1,4-glucan:maltose-1-phosphate maltosyltransferase (630 aa).

Alpha-maltose 1-phosphate is bound by residues Arg-234, Gln-294, and Asp-329. Catalysis depends on Asp-365, which acts as the Nucleophile. Asn-366 is a binding site for alpha-maltose 1-phosphate. The active-site Proton donor is Glu-394. 504–505 (KY) provides a ligand contact to alpha-maltose 1-phosphate.

Belongs to the glycosyl hydrolase 13 family. GlgE subfamily. As to quaternary structure, homodimer.

The catalysed reaction is alpha-maltose 1-phosphate + [(1-&gt;4)-alpha-D-glucosyl](n) = [(1-&gt;4)-alpha-D-glucosyl](n+2) + phosphate. Functionally, maltosyltransferase that uses maltose 1-phosphate (M1P) as the sugar donor to elongate linear or branched alpha-(1-&gt;4)-glucans. Is involved in a branched alpha-glucan biosynthetic pathway from trehalose, together with TreS, Mak and GlgB. The chain is Alpha-1,4-glucan:maltose-1-phosphate maltosyltransferase from Picrophilus torridus (strain ATCC 700027 / DSM 9790 / JCM 10055 / NBRC 100828 / KAW 2/3).